Here is a 323-residue protein sequence, read N- to C-terminus: Syntaxin-42 (323 aa).

At 1 to 302 (MATRNRTTVY…QREGAMVKCA (302 aa)) the chain is on the cytoplasmic side. A t-SNARE coiled-coil homology domain is found at 227–289 (QHVSAERERE…EEGYKQLQKA (63 aa)). The chain crosses the membrane as a helical; Anchor for type IV membrane protein span at residues 303 to 323 (TILLVLCLIMIVLLILKNILF).

Belongs to the syntaxin family. As to quaternary structure, interacts with VTI12 and SYP61 to form a t-SNARE complex and with VPS45. Expressed at low levels in roots, stems, flowers and leaves.

The protein localises to the golgi apparatus. It localises to the trans-Golgi network membrane. In terms of biological role, contributes to the regulation of secretory and vacuolar transport pathways in the post-Golgi network, and to the maintenance of the Golgi apparatus and trans-Golgi network (TGN) morphologies. Vesicle trafficking protein that functions in the secretory pathway and mediates liposome fusion. Required for extracellular resistance responses to a fungal pathogen. Also involved in the protection of chloroplasts from salicylic acid-dependent biotic stress. This chain is Syntaxin-42, found in Arabidopsis thaliana (Mouse-ear cress).